Here is a 336-residue protein sequence, read N- to C-terminus: COP9 signalosome complex subunit 5 (336 aa).

Residues 44–181 form the MPN domain; sequence VRISSVAMIK…IGAFRTIPEG (138 aa). Zn(2+) is bound by residues His-127, His-129, and Asp-140. The JAMM motif signature appears at 127-140; that stretch reads HSHPGYGCWLSGID.

It belongs to the peptidase M67A family. CSN5 subfamily. Component of the COP9 signalosome (CSN) complex.

The protein localises to the cytoplasm. Its subcellular location is the nucleus. Its function is as follows. Catalytic component of the COP9 signalosome (CSN) complex that acts as an regulator of the ubiquitin (Ubl) conjugation pathway by mediating the deneddylation of the cullin subunit of SCF-type E3 ubiquitin-protein ligase complexes. The CSN complex is involved in the regulation of the circadian clock through its control of the stability of the SCF(FWD-1) complex. The chain is COP9 signalosome complex subunit 5 (csn-5) from Neurospora crassa (strain ATCC 24698 / 74-OR23-1A / CBS 708.71 / DSM 1257 / FGSC 987).